A 163-amino-acid chain; its full sequence is Staphylokinase (163 aa).

Residues 1-27 (MLKRGLLFLTVLLLLFSFSSITNEVSA) form the signal peptide.

The protein belongs to the staphylokinase family.

It is found in the secreted. In terms of biological role, potent plasminogen activator that converts plasminogen into plasmin. It forms a 1:1 complex with plasmin, which in turn activates other plasminogen molecules. This is Staphylokinase (sak) from Staphylococcus aureus (strain MRSA252).